Here is a 322-residue protein sequence, read N- to C-terminus: Pyridoxal kinase (322 aa).

Met1 carries the N-acetylmethionine modification. Residues Ser22 and Thr57 each contribute to the pyridoxal site. Thr57 contributes to the pyridoxal 5'-phosphate binding site. Residue Ser69 is modified to Phosphoserine. Asp123 lines the ATP pocket. Residue Asp123 coordinates Na(+). Asp128 contributes to the Mg(2+) binding site. Thr158 contacts Na(+). 160 to 163 lines the ATP pocket; sequence NQFE. Phosphoserine is present on Ser174. Thr196 contributes to the Na(+) binding site. 196–197 serves as a coordination point for ATP; sequence TS. At Ser223 the chain carries Phosphoserine. ATP is bound by residues 236-238 and Thr243; that span reads VDA. Pyridoxal 5'-phosphate is bound at residue 244-245; sequence GD. Asp245 (proton acceptor) is an active-site residue. Residue Ser295 is modified to Phosphoserine.

This sequence belongs to the pyridoxine kinase family. Homodimer. Zn(2+) is required as a cofactor. The cofactor is Mg(2+). In terms of processing, the N-terminus is blocked.

It localises to the cytoplasm. The protein resides in the cytosol. The catalysed reaction is pyridoxal + ATP = pyridoxal 5'-phosphate + ADP + H(+). It carries out the reaction pyridoxamine + ATP = pyridoxamine 5'-phosphate + ADP + H(+). It catalyses the reaction pyridoxine + ATP = pyridoxine 5'-phosphate + ADP + H(+). It functions in the pathway cofactor metabolism; pyridoxal 5'-phosphate salvage; pyridoxal 5'-phosphate from pyridoxal: step 1/1. Its pathway is cofactor metabolism; pyridoxal 5'-phosphate salvage; pyridoxine 5'-phosphate from pyridoxine: step 1/1. It participates in cofactor metabolism; pyridoxal 5'-phosphate salvage; pyridoxamine 5'-phosphate from pyridoxamine: step 1/1. Its activity is regulated as follows. Activity is increased in the presence of K(+)or Na(+). Catalyzes the phosphorylation of the dietary vitamin B6 vitamers pyridoxal (PL), pyridoxine (PN) and pyridoxamine (PM) to form pyridoxal 5'-phosphate (PLP), pyridoxine 5'-phosphate (PNP) and pyridoxamine 5'-phosphate (PMP), respectively. PLP is the active form of vitamin B6, and acts as a cofactor for over 140 different enzymatic reactions. This is Pyridoxal kinase (PDXK) from Sus scrofa (Pig).